The sequence spans 146 residues: Transcriptional regulator MraZ (146 aa).

2 consecutive SpoVT-AbrB domains span residues asparagine 5–glutamate 51 and glycine 80–alanine 123.

This sequence belongs to the MraZ family. As to quaternary structure, forms oligomers.

It localises to the cytoplasm. Its subcellular location is the nucleoid. This chain is Transcriptional regulator MraZ, found in Acidobacterium capsulatum (strain ATCC 51196 / DSM 11244 / BCRC 80197 / JCM 7670 / NBRC 15755 / NCIMB 13165 / 161).